The sequence spans 257 residues: MLIVVSPAKTLDYESPLVISRFTQPQLLDHSAELITRARQLSPDQIASLMKISDKLAGLNAARFAQWQHDFHPDNARQALLAFKGDVYTGLAVEDFSDGDFDFAQAHLRMLSGLYGVLRPLDLMMPYRLEMGTRLDNSRGKDLYQFWGDVITQHINAALTAQGDEVLINLASDEYFKSVRPKALKGRIVTPVFKDEKNGQFKIISFYAKKARGMMARHIIKHRLTEVEQLTGFNVDGYYFVPEESDAHTLMFKRAEN.

This sequence belongs to the UPF0246 family.

This Aeromonas salmonicida (strain A449) protein is UPF0246 protein ASA_3634.